Consider the following 179-residue polypeptide: Large ribosomal subunit protein uL5c (179 aa).

It belongs to the universal ribosomal protein uL5 family. Part of the 50S ribosomal subunit; contacts the 5S rRNA.

It localises to the plastid. It is found in the organellar chromatophore. In terms of biological role, binds 5S rRNA, forms part of the central protuberance of the 50S subunit. This chain is Large ribosomal subunit protein uL5c (rpl5), found in Paulinella chromatophora.